The chain runs to 230 residues: MSERAPVVTIDGPSGAGKGTISQLLAQHLGWQLLDSGAIYRVLALAAIHHDVELENEESITLLAAHLDVKFLTGNDKDPVQVILEGEDVTTDIRTQECSNAASKVAAFPRVREALLRRQRAFRTAPGLIADGRDMGTVVFPTAPAKLYLTASAEERAQRRYNQLQDKGFDVNIERLLSEIIERDERDMNRPVAPLVPAEDAFVIDTSGKGIDEVLELALKYINEKLSSAN.

Residue 12-20 (GPSGAGKGT) coordinates ATP.

This sequence belongs to the cytidylate kinase family. Type 1 subfamily.

The protein localises to the cytoplasm. The enzyme catalyses CMP + ATP = CDP + ADP. It catalyses the reaction dCMP + ATP = dCDP + ADP. The protein is Cytidylate kinase of Shewanella putrefaciens (strain CN-32 / ATCC BAA-453).